The following is a 1072-amino-acid chain: Zinc finger MIZ domain-containing protein 1 (1072 aa).

Positions 1 to 120 (MNSMDRHIQQ…HQKSRQNDPP (120 aa)) are sufficient for transactivation activity; sufficient for interaction with NOTCH1. Residue K91 forms a Glycyl lysine isopeptide (Lys-Gly) (interchain with G-Cter in SUMO2) linkage. Disordered stretches follow at residues 112–141 (QKSR…TLSH) and 362–538 (TPSG…PYLS). Residues 128–141 (PLSSMSSMKPTLSH) are compositionally biased toward low complexity. Positions 419–436 (YGNQQYGPNSQFPTQPGQ) are enriched in polar residues. Residues 437–446 (YPTPNPPRPL) are compositionally biased toward pro residues. The segment covering 489 to 501 (SSGSSYSSYSQGS) has biased composition (low complexity). A compositionally biased stretch (pro residues) spans 517-528 (SPVPGNPTPPMT). The segment at 734–815 (GEDGVEQTAI…MWGILNAIQH (82 aa)) adopts an SP-RING-type zinc-finger fold. Residues C765, H767, C788, and C791 each contribute to the Zn(2+) site. Residues K841 and K850 each participate in a glycyl lysine isopeptide (Lys-Gly) (interchain with G-Cter in SUMO2) cross-link. A transactivation domain region spans residues 844-1072 (PDGIPSKRFK…DDLLSLFENN (229 aa)). The span at 875 to 886 (GPSPYPLPPPPG) shows a compositional bias: pro residues. The disordered stretch occupies residues 875 to 1072 (GPSPYPLPPP…DDLLSLFENN (198 aa)). 2 stretches are compositionally biased toward polar residues: residues 888-902 (TSSN…NYQG) and 958-968 (SSDQPHPSIQQ). Pro residues predominate over residues 988–1001 (APPPSQPPRQPPQA). The span at 1045 to 1072 (PDELLSYLDPPDLPSNSNDDLLSLFENN) shows a compositional bias: low complexity.

In terms of assembly, interacts with AR, but not with ESR1, NR3C1, PGR, THRB nor VDR. Interacts with NOTCH1 and RBPJ. Interacts with SMARCA4. Interacts (via SP-RING-type domain) with SMAD3 and SMAD4 (via MH2 domain). In terms of tissue distribution, expressed in brain.

It localises to the nucleus. It is found in the nucleoplasm. The protein localises to the cytoplasm. Functionally, acts as a transcriptional coactivator. Increases ligand-dependent transcriptional activity of AR and promotes AR sumoylation. The stimulation of AR activity is dependent upon sumoylation. Also functions as a transcriptional coactivator in the TGF-beta signaling pathway by increasing the activity of the SMAD3/SMAD4 transcriptional complex. Involved in transcriptional activation of a subset of NOTCH1 target genes including MYC. Involved in thymocyte and T cell development. Involved in the regulation of postmitotic positioning of pyramidal neurons in the developing cerebral cortex. In Mus musculus (Mouse), this protein is Zinc finger MIZ domain-containing protein 1 (Zmiz1).